Here is a 73-residue protein sequence, read N- to C-terminus: Heterin-2 (73 aa).

A signal peptide spans 1–22 (MQYKTFLVIFLAYLLVTEEALA). Positions 47–73 (KRALKNIFDPYQKNLDLELERLLSQLQ) are excised as a propeptide.

It belongs to the non-disulfide-bridged peptide (NDBP) superfamily. Medium-length antimicrobial peptide (group 3) family. In terms of tissue distribution, expressed by the venom gland.

The protein resides in the secreted. It is found in the target cell membrane. Its function is as follows. Amphipathic peptide with potent activities against Gram-positive bacteria (MIC=5.6-30.0 uM) and weaker activities against the tested Gram-negative bacteria (MIC=15 uM to &gt;45 uM). It has high hemolytic activity against human erythrocytes. May act by disrupting the integrity of the bacterial cell membrane. This is Heterin-2 from Heterometrus spinifer (Asia giant forest scorpion).